The sequence spans 158 residues: uncharacterized protein (158 aa).

2 helical membrane passes run 66–86 (LLII…PWIM) and 94–114 (FFSL…SLTI).

It localises to the membrane. This is an uncharacterized protein from Saccharomyces cerevisiae (strain ATCC 204508 / S288c) (Baker's yeast).